A 507-amino-acid polypeptide reads, in one-letter code: MVTIRADEISNIIRERIQHYTKKINILNTGTVLQVGDGIVRIYGLDEVMAGELIEFEEGTKGIALNLESKNVGVVLMGDGLRIKEGGSVKATGRIAQVPVGDAYLGRVINALATPIDGRGEILSSEFRLIDSPAPGILSRRSIYEPLQTGLIAIDSMIPIGRGQRELIIGDRQTGKTAVATDTILNQQSKNVICVYVAIGQKASSVAQVVTTLQEKGALQYTIVVAEMADSAATLQYLAPYTGAALAEYFMYKERHTLIIYDDLSKQAQAYRQMSLLLRRPPGREAYPGDVFYLHSRLLERAAKLSSKLGEGSMTALPIVETQSGDVSAYIPTNVISITDGQIFLSADLFNAGLRPAINVGISVSRVGSAAQIKAMKQVASKLKLELAQFAELEAFAQFASDLDQASQNLLARGQRLRELLKQSQSAPLTTAEQIMSIYAGINGYLDSLELGQIGKFLRELSDYLKVNKPRFQEIINSTKTFTEEAEAILKDTIPSEKDRFLLEEKI.

170–177 (GDRQTGKT) serves as a coordination point for ATP.

It belongs to the ATPase alpha/beta chains family. In terms of assembly, F-type ATPases have 2 components, CF(1) - the catalytic core - and CF(0) - the membrane proton channel. CF(1) has five subunits: alpha(3), beta(3), gamma(1), delta(1), epsilon(1). CF(0) has four main subunits: a, b, b' and c.

It localises to the plastid membrane. It carries out the reaction ATP + H2O + 4 H(+)(in) = ADP + phosphate + 5 H(+)(out). Produces ATP from ADP in the presence of a proton gradient across the membrane. The alpha chain is a regulatory subunit. The sequence is that of ATP synthase subunit alpha, plastid from Cuscuta gronovii (Common dodder).